The primary structure comprises 248 residues: Ubiquinone biosynthesis O-methyltransferase (248 aa).

The S-adenosyl-L-methionine site is built by Arg-41, Gly-72, Asp-93, and Met-136.

Belongs to the methyltransferase superfamily. UbiG/COQ3 family.

The catalysed reaction is a 3-demethylubiquinol + S-adenosyl-L-methionine = a ubiquinol + S-adenosyl-L-homocysteine + H(+). It catalyses the reaction a 3-(all-trans-polyprenyl)benzene-1,2-diol + S-adenosyl-L-methionine = a 2-methoxy-6-(all-trans-polyprenyl)phenol + S-adenosyl-L-homocysteine + H(+). It functions in the pathway cofactor biosynthesis; ubiquinone biosynthesis. Its function is as follows. O-methyltransferase that catalyzes the 2 O-methylation steps in the ubiquinone biosynthetic pathway. This is Ubiquinone biosynthesis O-methyltransferase from Brucella abortus (strain 2308).